The sequence spans 375 residues: Putative F-box protein At5g52620 (375 aa).

In terms of domain architecture, F-box spans 5-52 (GKSDPIPIDIILDILSRLSTNSIAKFGLASKFCGSILRGQDFIELFLI).

The sequence is that of Putative F-box protein At5g52620 from Arabidopsis thaliana (Mouse-ear cress).